The primary structure comprises 432 residues: Anaerobic glycerol-3-phosphate dehydrogenase subunit B (432 aa).

This sequence belongs to the anaerobic G-3-P dehydrogenase subunit B family. In terms of assembly, composed of a catalytic GlpA/B dimer and of membrane bound GlpC. Requires FMN as cofactor.

It carries out the reaction a quinone + sn-glycerol 3-phosphate = dihydroxyacetone phosphate + a quinol. The protein operates within polyol metabolism; glycerol degradation via glycerol kinase pathway; glycerone phosphate from sn-glycerol 3-phosphate (anaerobic route): step 1/1. Functionally, conversion of glycerol 3-phosphate to dihydroxyacetone. Uses fumarate or nitrate as electron acceptor. In Haemophilus influenzae (strain ATCC 51907 / DSM 11121 / KW20 / Rd), this protein is Anaerobic glycerol-3-phosphate dehydrogenase subunit B (glpB).